The primary structure comprises 718 residues: Serine/threonine-protein kinase tousled-like 2 (718 aa).

A disordered region spans residues 24–85 (GVSKGPLNSE…KGTPRGHKIS (62 aa)). Polar residues predominate over residues 29–44 (PLNSESSNQSLCSVGS). Basic and acidic residues predominate over residues 46-61 (SDKEVETPEKKQNDQR). Phosphoserine is present on residues S73, Q94, L99, and S102. Positions 147–176 (QQNSPSSTGSGNTEHSCSSQKQISIQHRQT) are disordered. The segment at 193-244 (NSDLEKKEGRIDDLLRANCDLRRQIDEQQKMLEKYKERLNRCVTMSKKLLIE) is required for interaction with TLK1 and DYNLL1/LC8. 3 coiled-coil regions span residues 193 to 244 (NSDL…LLIE), 285 to 315 (AFQNLIKQQERINSQREEIERQRKMLAKRKP), and 349 to 397 (HEQE…DNSQ). The disordered stretch occupies residues 310–337 (LAKRKPPAMGQAPPATNEQKQRKSKTNG). The region spanning 408–687 (YLLLHLLGRG…VQQLACDPYL (280 aa)) is the Protein kinase domain. Residues 414 to 422 (LGRGGFSEV) and K437 contribute to the ATP site. Catalysis depends on D538, which acts as the Proton acceptor. S696 carries the phosphoserine; by CHEK1 modification.

Belongs to the protein kinase superfamily. Ser/Thr protein kinase family. As to quaternary structure, monomer. May form homodimers; homodimerization may enhance autophosphoylation and enzymatic activity. Heterodimer with TLK1. Interacts with YWHAZ; association with 14-3-3 proteins such as YWHAZ regulates subcellular location. May also interact with FEZ1/LZTS1 and FEZ2. Interacts with CHD7 and CHD8. Interacts with DYNLL1/LC8. Requires Mg(2+) as cofactor. Phosphorylated at Ser-696, probably by CHEK1. Post-translationally, autophosphorylated; phosphorylation promotes the assembly of higher order oligomers and enzymatic activity. As to expression, ubiquitously expressed in all tissues examined, with high levels in heart and testis, in particular the pachytene spermatocytes and in round spermatids. Some evidence for the existence of a testis-specific isoform suggesting a role in spermatogenesis.

Its subcellular location is the nucleus. It localises to the nucleoplasm. The protein localises to the cytoplasm. It is found in the perinuclear region. The protein resides in the cytoskeleton. It carries out the reaction L-seryl-[protein] + ATP = O-phospho-L-seryl-[protein] + ADP + H(+). It catalyses the reaction L-threonyl-[protein] + ATP = O-phospho-L-threonyl-[protein] + ADP + H(+). Cell cycle-regulated, with maximal activity in the S-phase. Rapidly and transiently inhibited by phosphorylation following the generation of DNA double-stranded breaks during S-phase, probably by CHEK1, possibly at Ser-696. This inhibition is cell cycle checkpoint- and ATM-dependent. In terms of biological role, serine/threonine-protein kinase involved in the process of chromatin assembly and probably also DNA replication, transcription, repair, and chromosome segregation. Phosphorylates the chromatin assembly factors ASF1A and ASF1B. Phosphorylation of ASF1A prevents its proteasome-mediated degradation, thereby enhancing chromatin assembly. Negative regulator of amino acid starvation-induced autophagy. Testis-specific isoforms may play a role in spermatogenesis. Highly expressed in embryos throughout development. In Mus musculus (Mouse), this protein is Serine/threonine-protein kinase tousled-like 2 (Tlk2).